The chain runs to 359 residues: Methyltransferase fsa4 (359 aa).

S-adenosyl-L-methionine contacts are provided by residues 198 to 199, Asp224, 248 to 249, Arg264, and Arg265; these read GG and SF.

Belongs to the class I-like SAM-binding methyltransferase superfamily. Cation-independent O-methyltransferase family.

It functions in the pathway mycotoxin biosynthesis. In terms of biological role, methyltransferase; part of the gene cluster that mediates the biosynthesis of HIV-1 integrase inhibitor equisetin and of fusarisetin A, both trans-fused decalin-containing tetramic acids showing also antimicrobial activity. The PKS module of fsa1 together with the enoylreductase fsa3 catalyze the formation of the polyketide unit which is then conjugated to L-serine by the condensation domain of the fsa1 NRPS module. Activity of the Dieckmann cyclase domain (RED) results in release of the Dieckmann product intermediate. Diels-Alderase fsa2 is involved in endo-selective Diels-Alder cycloaddition to form the decalin ring, leading to the production of N-desmethylequisetin also called trichosetin. Subsequent N-methylation is carried out by fsa4 to give equisetin. The enzymatic gene responsible for the conversion of equisetin to fusarisetin A has not been identified yet and is probably located outside of the fsa cluster. This is Methyltransferase fsa4 from Fusarium sp. (strain FN080326).